The chain runs to 421 residues: Zinc chaperone AztD (421 aa).

Residues 1–29 (MMENIMKKRLLSTSISTLLLGLSVMPAFA) form the signal peptide. The Zn(2+) site is built by His101, His104, Asp106, His126, His169, His216, and His405. An intrachain disulfide couples Cys212 to Cys229. Residues 399–421 (GGSGKVHGEHHDHEAHHHDDHAH) form a disordered region. Residues 404–421 (VHGEHHDHEAHHHDDHAH) show a composition bias toward basic and acidic residues. An N-terminal Zn(2+)-binding motif; binds a third Zn(2+) with low affinity motif is present at residues 408–419 (HHDHEAHHHDDH).

In terms of assembly, monomer.

Its subcellular location is the periplasm. Its function is as follows. Acts as a zinc chaperone in the AztABCD zinc transport system. Directly transfers one zinc cation to the solute binding protein AztC; the transfer occurs without the formation of a stable interaction. Binds 3 Zn(2+), two with high affinity and one with low affinity, and transfers only Zn(2+) bound to site 2 to AztC. The chain is Zinc chaperone AztD from Citrobacter koseri (strain ATCC BAA-895 / CDC 4225-83 / SGSC4696).